A 1249-amino-acid chain; its full sequence is Clustered mitochondria protein homolog (1249 aa).

A disordered region spans residues 1–32 (MAQTNGELEHSKETPEQLTNGNHPEETQEEDN). The Clu domain occupies 318 to 562 (DITRSQENYL…RVTPLDVMWQ (245 aa)). Residues 605–628 (KAEADAAKAESSEATESKEQASEE) show a composition bias toward basic and acidic residues. Disordered stretches follow at residues 605-636 (KAEADAAKAESSEATESKEQASEEKSEEDQER) and 868-903 (KAPATNGANGVAQEEGKNKKKKKGGDSSSPARAAKE). 3 TPR repeats span residues 974–1007 (AKLYHQLSMLYYQTDEKEAAVELARKAVIVTERT), 1016–1049 (ILSYLNLSLFEHASGNTKTALAYIKHAMDLWKII), and 1058–1091 (ITTMNNAAVMLQHLKQYSDSRKWFEASLEVCESL). The interval 1174–1249 (NMNPRSLGTK…KLRGSKKSSA (76 aa)) is disordered. The segment covering 1176–1190 (NPRSLGTKIQPQVGQ) has biased composition (polar residues).

This sequence belongs to the CLU family. In terms of assembly, may associate with the eukaryotic translation initiation factor 3 (eIF-3) complex.

It localises to the cytoplasm. Its function is as follows. mRNA-binding protein involved in proper cytoplasmic distribution of mitochondria. This is Clustered mitochondria protein homolog from Aspergillus niger (strain ATCC MYA-4892 / CBS 513.88 / FGSC A1513).